A 529-amino-acid polypeptide reads, in one-letter code: MSQFSTTTSGDYLMALDAGTGSVRAVIFDLNGNQIAAGQAEWLHLPVPDVPGSMEFDLTTNWKLTCQCIRQALHQANLPASAIRAVAACSMREGIVLYDRSGKPIWACANVDARASREVSELKELYNNGFELEVYQCSGQTLALSAMPRLLWLAHYRPDIYRQAGTLTMISDWLANMLSGELAVDPSNAGTTGMLDLVTRNWQPNLLEMAGLRADILSPVKETGTLLGHVTAEAAQECGLLAGTPVVMGGGDVQLGCLGLGVVQPGQTAVLGGTFWQQVVNLPKPITDPNMNTRINPHVIPGMVQAESISFFTGLTMRWFRDAFCAEEKLLAQRLGIDTYSLLEDMAARVPAGAYGVMPIFSDVMRFKSWYHAAPSFINLSLDPEKCNKATLFRALEENAAIVSACNLAQIAEFSGVKASSVVFAGGGAKGKLWSQILADVTGIPVRVPVVKEATALGCAIAAGVGVGLYEALDKTGEQLVRWEREYQPNIEHKALYQAAKTNWQAVYTDQLTLVDSGLTTSLWKAPGL.

This sequence belongs to the FGGY kinase family.

It is found in the cytoplasm. It catalyses the reaction (S)-4,5-dihydroxypentane-2,3-dione + ATP = (2S)-2-hydroxy-3,4-dioxopentyl phosphate + ADP + H(+). Its function is as follows. Catalyzes the phosphorylation of autoinducer-2 (AI-2) to phospho-AI-2, which subsequently inactivates the transcriptional regulator LsrR and leads to the transcription of the lsr operon. Phosphorylates the ring-open form of (S)-4,5-dihydroxypentane-2,3-dione (DPD), which is the precursor to all AI-2 signaling molecules, at the C5 position. The polypeptide is Autoinducer-2 kinase (Yersinia enterocolitica serotype O:8 / biotype 1B (strain NCTC 13174 / 8081)).